A 189-amino-acid polypeptide reads, in one-letter code: Homeobox protein HD-2 (189 aa).

The segment at residues 119–181 (KPRTRANFPM…NARRRILPFM (63 aa)) is a DNA-binding region (homeobox; TALE-type).

Belongs to the TALE/KNOX homeobox family.

It is found in the nucleus. The polypeptide is Homeobox protein HD-2 (HD-2) (Encephalitozoon cuniculi (strain GB-M1) (Microsporidian parasite)).